Here is a 358-residue protein sequence, read N- to C-terminus: UDP-N-acetylglucosamine--N-acetylmuramyl-(pentapeptide) pyrophosphoryl-undecaprenol N-acetylglucosamine transferase (358 aa).

Residues 11-13 (TGG), Asn122, Arg161, Ser189, Ile243, 262-267 (ALTVCE), and Gln288 contribute to the UDP-N-acetyl-alpha-D-glucosamine site.

The protein belongs to the glycosyltransferase 28 family. MurG subfamily.

Its subcellular location is the cell inner membrane. It catalyses the reaction di-trans,octa-cis-undecaprenyl diphospho-N-acetyl-alpha-D-muramoyl-L-alanyl-D-glutamyl-meso-2,6-diaminopimeloyl-D-alanyl-D-alanine + UDP-N-acetyl-alpha-D-glucosamine = di-trans,octa-cis-undecaprenyl diphospho-[N-acetyl-alpha-D-glucosaminyl-(1-&gt;4)]-N-acetyl-alpha-D-muramoyl-L-alanyl-D-glutamyl-meso-2,6-diaminopimeloyl-D-alanyl-D-alanine + UDP + H(+). The protein operates within cell wall biogenesis; peptidoglycan biosynthesis. Cell wall formation. Catalyzes the transfer of a GlcNAc subunit on undecaprenyl-pyrophosphoryl-MurNAc-pentapeptide (lipid intermediate I) to form undecaprenyl-pyrophosphoryl-MurNAc-(pentapeptide)GlcNAc (lipid intermediate II). The chain is UDP-N-acetylglucosamine--N-acetylmuramyl-(pentapeptide) pyrophosphoryl-undecaprenol N-acetylglucosamine transferase from Coxiella burnetii (strain Dugway 5J108-111).